The chain runs to 440 residues: Protein root UVB sensitive 3 (440 aa).

3 consecutive transmembrane segments (helical) span residues 109–129 (IGAT…GILF), 154–174 (IGML…VVVC), and 232–252 (FTSG…VFHM).

Belongs to the RUS1 family.

The protein resides in the membrane. This Arabidopsis thaliana (Mouse-ear cress) protein is Protein root UVB sensitive 3.